The following is a 171-amino-acid chain: NADH-quinone oxidoreductase subunit I (171 aa).

2 consecutive 4Fe-4S ferredoxin-type domains span residues 63–92 (RRYENGEERCIACKLCEAVCPALAITIESD) and 102–131 (TRYDIDLTKCIFCGFCEESCPVDSIVETQI). Cys-72, Cys-75, Cys-78, Cys-82, Cys-111, Cys-114, Cys-117, and Cys-121 together coordinate [4Fe-4S] cluster.

Belongs to the complex I 23 kDa subunit family. In terms of assembly, NDH-1 is composed of 14 different subunits. Subunits NuoA, H, J, K, L, M, N constitute the membrane sector of the complex. Requires [4Fe-4S] cluster as cofactor.

It is found in the cell inner membrane. The catalysed reaction is a quinone + NADH + 5 H(+)(in) = a quinol + NAD(+) + 4 H(+)(out). NDH-1 shuttles electrons from NADH, via FMN and iron-sulfur (Fe-S) centers, to quinones in the respiratory chain. The immediate electron acceptor for the enzyme in this species is believed to be ubiquinone. Couples the redox reaction to proton translocation (for every two electrons transferred, four hydrogen ions are translocated across the cytoplasmic membrane), and thus conserves the redox energy in a proton gradient. In Paracidovorax citrulli (strain AAC00-1) (Acidovorax citrulli), this protein is NADH-quinone oxidoreductase subunit I.